We begin with the raw amino-acid sequence, 39 residues long: Contryphan-Cal2 (39 aa).

An N-terminal signal peptide occupies residues 1 to 20; the sequence is MTRTAVLLLTLLFLVAMAAS. Cys-29 and Cys-35 are joined by a disulfide.

In terms of tissue distribution, expressed by the venom duct.

It is found in the secreted. Its function is as follows. Probable neurotoxin. The sequence is that of Contryphan-Cal2 from Californiconus californicus (California cone).